We begin with the raw amino-acid sequence, 508 residues long: MNGRTRSPARAVMVLGTTSGAGKSWLATALCRWYARQGLKVAPFKAQNMSNNARVVPGSGGRLGEIGSAQYFQALAARVLPDVRMNPVLLKPENDTGSQVVVLGEVRADLAAVPWRERSERLWPFAQDALLALMAENDVVVIEGAGSPAEINLHASDYVNMRTAQAARAACLLVSDIDRGGAFAHLYGTHQLLPAAERALLRGYVLNRFRGDARLLEPGPQQLLALTGVPTLAVLPMWRGHGLPEEDGLHDEGPGWQRGAGNAAASLRIAVVAYPRISNLDEFQPLRQLRGVQLRWARSAEELAGADWIVLPGSKHTSGDLAWLREQRIDAALARHAAARRPVLGLCGGLQMLGEALVDPHGVEGENGEGNAPGLGLLPLVTAFEPDKLLRRTDACFDGVGDEWSMLRGVQFGGYEIRHGRSVQHPALPAAAVALRNAEGEAIGWQQGSVLGLYAHGLFESTEVLRALFGARVRGLESVFDGLADFIDRHFEPGALMRLLADAEPGKD.

Residues 266–464 form the GATase cobBQ-type domain; the sequence is SLRIAVVAYP…AHGLFESTEV (199 aa). Cysteine 347 serves as the catalytic Nucleophile. Histidine 456 is a catalytic residue.

The protein belongs to the CobB/CobQ family. CobQ subfamily.

It functions in the pathway cofactor biosynthesis; adenosylcobalamin biosynthesis. Its function is as follows. Catalyzes amidations at positions B, D, E, and G on adenosylcobyrinic A,C-diamide. NH(2) groups are provided by glutamine, and one molecule of ATP is hydrogenolyzed for each amidation. The sequence is that of Cobyric acid synthase from Methylibium petroleiphilum (strain ATCC BAA-1232 / LMG 22953 / PM1).